Consider the following 96-residue polypeptide: uncharacterized protein (96 aa).

The N-terminal stretch at 1 to 28 (MNKKAIVGIFMSILMAGLVGCAGSSDAQ) is a signal peptide.

This is an uncharacterized protein from Butyrivibrio fibrisolvens.